Here is a 297-residue protein sequence, read N- to C-terminus: tRNA(Ile)-lysidine synthase (297 aa).

An ATP-binding site is contributed by 16 to 21 (SGGSDS).

It belongs to the tRNA(Ile)-lysidine synthase family.

It is found in the cytoplasm. It catalyses the reaction cytidine(34) in tRNA(Ile2) + L-lysine + ATP = lysidine(34) in tRNA(Ile2) + AMP + diphosphate + H(+). Functionally, ligates lysine onto the cytidine present at position 34 of the AUA codon-specific tRNA(Ile) that contains the anticodon CAU, in an ATP-dependent manner. Cytidine is converted to lysidine, thus changing the amino acid specificity of the tRNA from methionine to isoleucine. This is tRNA(Ile)-lysidine synthase from Mesomycoplasma hyopneumoniae (strain 232) (Mycoplasma hyopneumoniae).